We begin with the raw amino-acid sequence, 1069 residues long: RE1-silencing transcription factor (1069 aa).

The tract at residues 32 to 121 is interaction with SIN3A; it reads DLHDLSKAEL…SLELSVVEPQ (90 aa). An interaction with SIN3B region spans residues 43-57; sequence APQLIMLANVALTGE. The interval 85 to 104 is disordered; it reads SDSEGEGLEESAELKGDPSG. An interaction with ZFP90 region spans residues 144–417; that stretch reads PVAEDKCKNL…KSKHPTCPSK (274 aa). The C2H2-type 1 zinc finger occupies 158 to 180; that stretch reads FRCKPCQYEAESEEQFVHHIRVH. A required for binding to the neuron-restrictive silencer element region spans residues 200–211; that stretch reads SGASPSEEGEFS. C2H2-type zinc fingers lie at residues 215–237, 247–269, 275–297, 303–325, 331–354, 360–382, and 388–411; these read IRCD…LKHH, YKCI…LRNH, YTCS…VRTH, YKCE…MRTH, FKCD…RQVH, LNCP…VELH, and FNCP…KSKH. Disordered regions lie at residues 425 to 737 and 830 to 1022; these read KLKK…MELP and KASK…GKEG. Residues 451–482 show a composition bias toward basic and acidic residues; sequence EQAKTKGVDASARRSERPVKGVGKDVPKEKKP. Over residues 484–493 the composition is skewed to polar residues; it reads SNASVVQVTT. Basic and acidic residues-rich tracts occupy residues 498 to 511 and 554 to 576; these read SAVE…KHTD and ESKP…KADK. Residues 584–600 show a composition bias toward basic residues; the sequence is KGGKKTALKTKTAKKGS. Residues 630–643 are compositionally biased toward polar residues; the sequence is AVVTPSGSTQTELS. 2 stretches are compositionally biased toward pro residues: residues 679–706 and 713–734; these read PSPP…PCPM and PSPP…PLPM. Basic and acidic residues-rich tracts occupy residues 851 to 860 and 876 to 886; these read RREETPKDQE and GGTEEAGESRA. Low complexity predominate over residues 894 to 904; sequence STSALSSEQSS. The segment covering 930-943 has biased composition (basic and acidic residues); that stretch reads TEQKTDRVPLKDSA. Position 948 is a phosphoserine (serine 948). A compositionally biased stretch (low complexity) spans 957–968; sequence EAAAPAVVASPP. The interaction with RCOR1 stretch occupies residues 981 to 1059; the sequence is EGIHSHDGSD…HLNRHLVNVY (79 aa). The C2H2-type 9 zinc finger occupies 1032-1054; the sequence is FVCIFCDRSFRKEKDYSKHLNRH.

As to quaternary structure, isoform 1 and isoform 6 form heterodimers. Isoform 6: Forms homodimers and homooligomers; binds to the neuron-restrictive silencer element (NRSE) as monomer. Interacts with SIN3A, SIN3B and RCOR1. Interacts with CDYL. Interacts with EHMT1 and EHMT2 only in the presence of CDYL. Part of a complex containing at least CDYL, REST, WIZ, SETB1, EHMT1 and EHMT2. Interacts (via zinc-finger DNA-binding domain) with ZFP90 (via N- and C-termini); the interaction inhibits REST repressor activity. Interacts (via C2H2-type zinc finger 5) with PRICKLE1. Interacts with FBXW11 and BTRC. Interacts with USP7. O-glycosylated. Post-translationally, phosphorylated; phosphorylation is required for ubiquitination. In terms of processing, ubiquitinated; ubiquitination is mediated by BTRC and leads to proteasomal degradation in G2 phase. Ubiquitination increases during neuronal differentiation. Deubiquitinated by USP7; leading to its stabilization and promoting the maintenance of neural progenitor cells. As to expression, expressed in the hippocampus including the granule cell layer of the dentate gyrus, the pyramidal cell layers of CA1 and CA3, the apical and basilar dendrite layers of the stratum radiatum and stratum oriens of CA1, the stratum lucidum and stratum oriens of CA3 and in astroglia (at protein level). Expressed in the brain, with the highest levels in the neurons of hippocampus, pons/medulla and midbrain.

The protein localises to the nucleus. The protein resides in the cytoplasm. Its function is as follows. Transcriptional repressor which binds neuron-restrictive silencer element (NRSE) and represses neuronal gene transcription in non-neuronal cells. Restricts the expression of neuronal genes by associating with two distinct corepressors, SIN3A and RCOR1, which in turn recruit histone deacetylase to the promoters of REST-regulated genes. Mediates repression by recruiting the BHC complex at RE1/NRSE sites which acts by deacetylating and demethylating specific sites on histones, thereby acting as a chromatin modifier. Transcriptional repression by REST-CDYL via the recruitment of histone methyltransferase EHMT2 may be important in transformation suppression. Represses the expression of SRRM4 in non-neural cells to prevent the activation of neural-specific splicing events and to prevent production of REST isoform 6. Repressor activity may be inhibited by forming heterodimers with isoform 6, thereby preventing binding to NRSE or binding to corepressors and leading to derepression of target genes. Also maintains repression of neuronal genes in neural stem cells, and allows transcription and differentiation into neurons by dissociation from RE1/NRSE sites of target genes. Thereby is involved in maintaining the quiescent state of adult hippocampal neural stem cells and preventing premature differentiation into mature neurons. Plays a role in the developmental switch in synaptic NMDA receptor composition during postnatal development, by repressing GRIN2B expression and thereby altering NMDA receptor properties from containing primarily GRIN2B to primarily GRIN2A subunits. Acts as a regulator of osteoblast differentiation. Key repressor of gene expression in hypoxia; represses genes in hypoxia by direct binding to an RE1/NRSE site on their promoter regions. May also function in stress resistance in the brain during aging; possibly by regulating expression of genes involved in cell death and in the stress response. Repressor of gene expression in the hippocampus after ischemia by directly binding to RE1/NRSE sites and recruiting SIN3A and RCOR1 to promoters of target genes, thereby promoting changes in chromatin modifications and ischemia-induced cell death. After ischemia, might play a role in repression of miR-132 expression in hippocampal neurons, thereby leading to neuronal cell death. In terms of biological role, binds to the 3' region of the neuron-restrictive silencer element (NRSE), with lower affinity than full-length REST isoform 1. Exhibits weaker repressor activity compared to isoform 1. May negatively regulate the repressor activity of isoform 1 by binding to isoform 1, thereby preventing its binding to NRSE and leading to derepression of target genes. However, in another study, does not appear to be implicated in repressor activity of a NRSE motif-containing reporter construct nor in inhibitory activity on the isoform 1 transcriptional repressor activity. Post-transcriptional inactivation of REST by SRRM4-dependent alternative splicing into isoform 6 is required in mechanosensory hair cells in the inner ear for derepression of neuronal genes and hearing. The protein is RE1-silencing transcription factor (Rest) of Rattus norvegicus (Rat).